Reading from the N-terminus, the 216-residue chain is 4-hydroxy-tetrahydrodipicolinate reductase (216 aa).

Residues 9–12 (SGRM), 71–73 (GTT), and 95–98 (AYNF) contribute to the NAD(+) site. The active-site Proton donor/acceptor is the His127. Residue His128 participates in (S)-2,3,4,5-tetrahydrodipicolinate binding. Lys131 serves as a coordination point for NAD(+). The active-site Proton donor is the Lys131. 137–138 (GT) lines the (S)-2,3,4,5-tetrahydrodipicolinate pocket.

It belongs to the DapB family. Homotetramer.

Its subcellular location is the cytoplasm. It catalyses the reaction (S)-2,3,4,5-tetrahydrodipicolinate + NAD(+) + H2O = (2S,4S)-4-hydroxy-2,3,4,5-tetrahydrodipicolinate + NADH + H(+). The enzyme catalyses (S)-2,3,4,5-tetrahydrodipicolinate + NADP(+) + H2O = (2S,4S)-4-hydroxy-2,3,4,5-tetrahydrodipicolinate + NADPH + H(+). It participates in amino-acid biosynthesis; L-lysine biosynthesis via DAP pathway; (S)-tetrahydrodipicolinate from L-aspartate: step 4/4. Its activity is regulated as follows. Is inhibited by high concentrations of NADH. Catalyzes the conversion of 4-hydroxy-tetrahydrodipicolinate (HTPA) to tetrahydrodipicolinate. Uses NADPH as a reductant with much more efficiency than NADH. The chain is 4-hydroxy-tetrahydrodipicolinate reductase from Thermotoga maritima (strain ATCC 43589 / DSM 3109 / JCM 10099 / NBRC 100826 / MSB8).